A 517-amino-acid chain; its full sequence is Aldehyde dehydrogenase X, mitochondrial (517 aa).

Residues 1–17 (MLRFLAPRLLSLQGRTA) constitute a mitochondrion transit peptide. The residue at position 51 (Lys51) is an N6-acetyllysine. Lys52 bears the N6-acetyllysine; alternate mark. N6-succinyllysine; alternate is present on Lys52. Lys81 carries the post-translational modification N6-succinyllysine. Position 262–267 (262–267 (GSTEVG)) interacts with NAD(+). The Proton acceptor role is filled by Glu285. Catalysis depends on Cys319, which acts as the Nucleophile. N6-acetyllysine; alternate is present on residues Lys364, Lys383, Lys399, Lys414, and Lys426. An N6-succinyllysine; alternate mark is found at Lys364, Lys383, Lys399, Lys414, and Lys426. Lys429 carries the N6-acetyllysine modification.

The protein belongs to the aldehyde dehydrogenase family. Homotetramer.

Its subcellular location is the mitochondrion matrix. The enzyme catalyses an aldehyde + NAD(+) + H2O = a carboxylate + NADH + 2 H(+). The protein operates within alcohol metabolism; ethanol degradation; acetate from ethanol: step 2/2. ALDHs play a major role in the detoxification of alcohol-derived acetaldehyde. They are involved in the metabolism of corticosteroids, biogenic amines, neurotransmitters, and lipid peroxidation. The polypeptide is Aldehyde dehydrogenase X, mitochondrial (ALDH1B1) (Pongo abelii (Sumatran orangutan)).